An 86-amino-acid chain; its full sequence is Large ribosomal subunit protein bL27 (86 aa).

A disordered region spans residues 1–26; it reads MATKKAGGSSRNGRDSAGRRLGVKKS.

It belongs to the bacterial ribosomal protein bL27 family.

The chain is Large ribosomal subunit protein bL27 from Rickettsia prowazekii (strain Madrid E).